The chain runs to 819 residues: Nuclear pore complex protein Nup93 (819 aa).

At T49 the chain carries Phosphothreonine. Residues S52, S66, S72, S75, S80, S430, and S767 each carry the phosphoserine modification.

Belongs to the nucleoporin interacting component (NIC) family. Part of the nuclear pore complex (NPC). Component of the p62 complex, a complex composed of NUP62 and NUP54. Forms a complex with NUP35, NUP155, NUP205 and lamin B; the interaction with NUP35 is direct. Does not interact with TPR. Interacts with SMAD4 and IPO7; translocates SMAD4 to the nucleus through the NPC upon BMP7 stimulation resulting in activation of SMAD4 signaling. As to quaternary structure, (Microbial infection) Interacts with SARS-CoV translation inhibitor nsp1; this interaction may disrupt nuclear pore function.

It localises to the nucleus membrane. Its subcellular location is the nucleus. The protein resides in the nuclear pore complex. The protein localises to the nucleus envelope. Plays a role in the nuclear pore complex (NPC) assembly and/or maintenance. May anchor nucleoporins, but not NUP153 and TPR, to the NPC. During renal development, regulates podocyte migration and proliferation through SMAD4 signaling. This is Nuclear pore complex protein Nup93 (NUP93) from Homo sapiens (Human).